Consider the following 244-residue polypeptide: 5-oxoprolinase subunit A (244 aa).

The protein belongs to the LamB/PxpA family. As to quaternary structure, forms a complex composed of PxpA, PxpB and PxpC.

The catalysed reaction is 5-oxo-L-proline + ATP + 2 H2O = L-glutamate + ADP + phosphate + H(+). Catalyzes the cleavage of 5-oxoproline to form L-glutamate coupled to the hydrolysis of ATP to ADP and inorganic phosphate. The protein is 5-oxoprolinase subunit A of Salmonella dublin (strain CT_02021853).